The sequence spans 557 residues: Dihydroxy-acid dehydratase 2 (557 aa).

Cys50 contacts [2Fe-2S] cluster. Asp82 contributes to the Mg(2+) binding site. Cys123 contacts [2Fe-2S] cluster. Positions 124 and 125 each coordinate Mg(2+). Lys125 carries the post-translational modification N6-carboxylysine. Cys195 is a binding site for [2Fe-2S] cluster. Position 447 (Glu447) interacts with Mg(2+). The active-site Proton acceptor is the Ser473.

It belongs to the IlvD/Edd family. Homodimer. It depends on [2Fe-2S] cluster as a cofactor. Requires Mg(2+) as cofactor.

It catalyses the reaction (2R)-2,3-dihydroxy-3-methylbutanoate = 3-methyl-2-oxobutanoate + H2O. It carries out the reaction (2R,3R)-2,3-dihydroxy-3-methylpentanoate = (S)-3-methyl-2-oxopentanoate + H2O. The protein operates within amino-acid biosynthesis; L-isoleucine biosynthesis; L-isoleucine from 2-oxobutanoate: step 3/4. It participates in amino-acid biosynthesis; L-valine biosynthesis; L-valine from pyruvate: step 3/4. In terms of biological role, functions in the biosynthesis of branched-chain amino acids. Catalyzes the dehydration of (2R,3R)-2,3-dihydroxy-3-methylpentanoate (2,3-dihydroxy-3-methylvalerate) into 2-oxo-3-methylpentanoate (2-oxo-3-methylvalerate) and of (2R)-2,3-dihydroxy-3-methylbutanoate (2,3-dihydroxyisovalerate) into 2-oxo-3-methylbutanoate (2-oxoisovalerate), the penultimate precursor to L-isoleucine and L-valine, respectively. The protein is Dihydroxy-acid dehydratase 2 of Burkholderia lata (strain ATCC 17760 / DSM 23089 / LMG 22485 / NCIMB 9086 / R18194 / 383).